Here is a 225-residue protein sequence, read N- to C-terminus: 3-dehydroquinate dehydratase (225 aa).

3-dehydroquinate contacts are provided by residues serine 6, 30 to 32, and arginine 62; that span reads EWR. Histidine 118 acts as the Proton donor/acceptor in catalysis. The Schiff-base intermediate with substrate role is filled by lysine 143. 3-dehydroquinate is bound by residues arginine 186, serine 205, and glutamine 209.

This sequence belongs to the type-I 3-dehydroquinase family. Homodimer.

It carries out the reaction 3-dehydroquinate = 3-dehydroshikimate + H2O. It participates in metabolic intermediate biosynthesis; chorismate biosynthesis; chorismate from D-erythrose 4-phosphate and phosphoenolpyruvate: step 3/7. Its function is as follows. Involved in the third step of the chorismate pathway, which leads to the biosynthesis of aromatic amino acids. Catalyzes the cis-dehydration of 3-dehydroquinate (DHQ) and introduces the first double bond of the aromatic ring to yield 3-dehydroshikimate. The protein is 3-dehydroquinate dehydratase of Streptococcus pneumoniae (strain ATCC 700669 / Spain 23F-1).